Reading from the N-terminus, the 398-residue chain is Arginine biosynthesis bifunctional protein ArgJ (398 aa).

Substrate-binding residues include T148, K174, T185, E271, N393, and T398. T185 serves as the catalytic Nucleophile.

The protein belongs to the ArgJ family. In terms of assembly, heterotetramer of two alpha and two beta chains.

It is found in the cytoplasm. The enzyme catalyses N(2)-acetyl-L-ornithine + L-glutamate = N-acetyl-L-glutamate + L-ornithine. It carries out the reaction L-glutamate + acetyl-CoA = N-acetyl-L-glutamate + CoA + H(+). The protein operates within amino-acid biosynthesis; L-arginine biosynthesis; L-ornithine and N-acetyl-L-glutamate from L-glutamate and N(2)-acetyl-L-ornithine (cyclic): step 1/1. Its pathway is amino-acid biosynthesis; L-arginine biosynthesis; N(2)-acetyl-L-ornithine from L-glutamate: step 1/4. In terms of biological role, catalyzes two activities which are involved in the cyclic version of arginine biosynthesis: the synthesis of N-acetylglutamate from glutamate and acetyl-CoA as the acetyl donor, and of ornithine by transacetylation between N(2)-acetylornithine and glutamate. This chain is Arginine biosynthesis bifunctional protein ArgJ, found in Listeria monocytogenes serotype 4b (strain F2365).